Reading from the N-terminus, the 146-residue chain is Large-conductance mechanosensitive channel (146 aa).

Transmembrane regions (helical) follow at residues valine 14–leucine 34 and glycine 81–valine 101.

The protein belongs to the MscL family. Homopentamer.

It localises to the cell membrane. Its function is as follows. Channel that opens in response to stretch forces in the membrane lipid bilayer. May participate in the regulation of osmotic pressure changes within the cell. The polypeptide is Large-conductance mechanosensitive channel (Symbiobacterium thermophilum (strain DSM 24528 / JCM 14929 / IAM 14863 / T)).